A 191-amino-acid polypeptide reads, in one-letter code: Prostaglandin-H2 D-isomerase (191 aa).

The signal sequence occupies residues 1-24 (MAALHTLWMGLVLLGVLGVLQTQA). Gln-25 bears the Pyrrolidone carboxylic acid mark. N-linked (GlcNAc...) asparagine glycosylation is present at Asn-51. Cys-65 functions as the Nucleophile in the catalytic mechanism. Residue Asn-78 is glycosylated (N-linked (GlcNAc...) asparagine). A disulfide bridge links Cys-89 with Cys-186.

It belongs to the calycin superfamily. Lipocalin family. In terms of assembly, monomer.

The protein localises to the rough endoplasmic reticulum. It is found in the nucleus membrane. Its subcellular location is the golgi apparatus. The protein resides in the cytoplasm. It localises to the perinuclear region. The protein localises to the secreted. The enzyme catalyses prostaglandin H2 = prostaglandin D2. Its function is as follows. Catalyzes the conversion of PGH2 to PGD2, a prostaglandin involved in smooth muscle contraction/relaxation and a potent inhibitor of platelet aggregation. Involved in a variety of CNS functions, such as sedation, NREM sleep and PGE2-induced allodynia, and may have an anti-apoptotic role in oligodendrocytes. Binds small non-substrate lipophilic molecules, including biliverdin, bilirubin, retinal, retinoic acid and thyroid hormone, and may act as a scavenger for harmful hydrophobic molecules and as a secretory retinoid and thyroid hormone transporter. Possibly involved in development and maintenance of the blood-brain, blood-retina, blood-aqueous humor and blood-testis barrier. It is likely to play important roles in both maturation and maintenance of the central nervous system and male reproductive system. Involved in PLA2G3-dependent maturation of mast cells. PLA2G3 is secreted by immature mast cells and acts on nearby fibroblasts upstream to PTDGS to synthesize PGD2, which in turn promotes mast cell maturation and degranulation via PTGDR. This is Prostaglandin-H2 D-isomerase (PTGDS) from Ursus arctos (Brown bear).